The primary structure comprises 293 residues: D-psicose 3-epimerase (293 aa).

Positions 6 and 107 each coordinate substrate. The Proton donor/acceptor role is filled by Glu-150. Glu-150 provides a ligand contact to Mn(2+). Residues Glu-156 and 183-186 (DTFH) contribute to the substrate site. Residues Asp-183 and His-209 each contribute to the Mn(2+) site. Residue Arg-215 participates in substrate binding. The active-site Proton donor/acceptor is the Glu-244. Glu-244 contributes to the Mn(2+) binding site.

It belongs to the hyi family. As to quaternary structure, homotetramer. It depends on Mn(2+) as a cofactor. Co(2+) serves as cofactor.

It catalyses the reaction D-allulose = keto-D-fructose. Involved in the biosynthesis of D-psicose. Catalyzes the reversible epimerization of D-fructose at the C3 position to yield D-psicose. The enzyme is highly specific for D-psicose and shows very low activity with D-tagatose. The protein is D-psicose 3-epimerase of Ruminiclostridium cellulolyticum (strain ATCC 35319 / DSM 5812 / JCM 6584 / H10) (Clostridium cellulolyticum).